A 433-amino-acid chain; its full sequence is Homoserine dehydrogenase (433 aa).

NADPH is bound by residues threonine 12, valine 13, and lysine 102. NAD(+) is bound at residue valine 13. NADP(+)-binding residues include valine 13 and lysine 102. Na(+) is bound by residues glutamate 126, valine 129, glycine 131, and isoleucine 133. 2 residues coordinate NADP(+): glycine 184 and glutamate 187. L-homoserine-binding residues include glutamate 187 and aspartate 198. The active-site Proton donor is lysine 202. Glycine 303 serves as a coordination point for NADPH. Glycine 303 provides a ligand contact to NAD(+). Glycine 303 is a binding site for NADP(+). Positions 356–433 (YCRFLCADVP…EIPSVIRVLS (78 aa)) constitute an ACT domain.

This sequence belongs to the homoserine dehydrogenase family. Requires a metal cation as cofactor.

It carries out the reaction L-homoserine + NADP(+) = L-aspartate 4-semialdehyde + NADPH + H(+). It catalyses the reaction L-homoserine + NAD(+) = L-aspartate 4-semialdehyde + NADH + H(+). The protein operates within amino-acid biosynthesis; L-methionine biosynthesis via de novo pathway; L-homoserine from L-aspartate: step 3/3. It participates in amino-acid biosynthesis; L-threonine biosynthesis; L-threonine from L-aspartate: step 3/5. Functionally, catalyzes the conversion of L-aspartate-beta-semialdehyde (L-Asa) to L-homoserine (L-Hse), the third step in the biosynthesis of threonine and methionine from aspartate. This chain is Homoserine dehydrogenase (hom), found in Synechocystis sp. (strain ATCC 27184 / PCC 6803 / Kazusa).